The chain runs to 445 residues: MSPESRKLLNIVILGVGFMFMFTAFQTSGNVAQTVISSLNSTSFHGSGYTSLAIIYSVFSASNLIAPSVIAVLGCQMSMFLSGLLYSAYIAMFIQPYTWSFYTLSVLIGIAAAVLWTAQGCCLTINSDERTIGRHSGIFWALLQFSMLFGNLYIYLAWKGEINISDTDRRTVFIALTVISLVGSVLFFLIRTPDSDSAQEDEASDSVADAEGSMSAQGCLSKAMDAFRKSLKLSITKEMLLLSILVAYTGLELTFYSGVYGTCIGSMNVFGTDAKSLIGLSGIFVGLGEVLGGGLFGLLGKNNYFGRNPVVILGVVVHFLAFYMIYLYMPSDAPIASRSGTDLSAFINPSKTLALACSFLLGLGDSCYNTQMLSILGSLYPDNSAPAFAVFKFVQSVSAAVAFFYSNYLLLHWQLLILVIFGFFGTISFFFVEWGLTQRSLYNSM.

A helical transmembrane segment spans residues 8-28 (LLNIVILGVGFMFMFTAFQTS). Asparagine 40 carries an N-linked (GlcNAc...) asparagine glycan. The next 4 helical transmembrane spans lie at 52–72 (LAII…VIAV), 74–94 (GCQM…AMFI), 98–118 (TWSF…LWTA), and 138–158 (IFWA…YLAW). Asparagine 163 is a glycosylation site (N-linked (GlcNAc...) asparagine). 7 helical membrane passes run 170–190 (RTVF…FFLI), 239–259 (MLLL…YSGV), 277–297 (LIGL…GLFG), 309–329 (PVVI…YLYM), 343–363 (LSAF…LLGL), 385–405 (APAF…AFFY), and 415–435 (LLIL…VEWG).

Belongs to the unc-93 family.

The protein resides in the membrane. The chain is UNC93-like protein MFSD11 (mfsd11) from Xenopus laevis (African clawed frog).